Consider the following 352-residue polypeptide: Photosystem II D2 protein (352 aa).

Residues methionine 1 to glycine 31 lie on the Cytoplasmic side of the membrane. Residues tryptophan 32–threonine 53 traverse the membrane as a helical segment. At phenylalanine 54–glycine 108 the chain is on the lumenal, thylakoid side. The chain crosses the membrane as a helical span at residues glycine 109–glutamate 131. Histidine 117 is a binding site for chlorophyll a. Position 129 (glutamine 129) interacts with pheophytin a. Topologically, residues isoleucine 132–proline 140 are cytoplasmic. The chain crosses the membrane as a helical span at residues tyrosine 141–leucine 162. Asparagine 142 contributes to the pheophytin a binding site. Residues glycine 163–asparagine 190 are Lumenal, thylakoid-facing. Residues tryptophan 191–threonine 217 form a helical membrane-spanning segment. Histidine 197 serves as a coordination point for chlorophyll a. Residues histidine 214 and phenylalanine 261 each contribute to the a plastoquinone site. Position 214 (histidine 214) interacts with Fe cation. Residues valine 218–arginine 265 are Cytoplasmic-facing. The helical transmembrane segment at tryptophan 266–glycine 288 threads the bilayer. Position 268 (histidine 268) interacts with Fe cation. The Lumenal, thylakoid segment spans residues leucine 289–leucine 352.

This sequence belongs to the reaction center PufL/M/PsbA/D family. PSII is composed of 1 copy each of membrane proteins PsbA, PsbB, PsbC, PsbD, PsbE, PsbF, PsbH, PsbI, PsbJ, PsbK, PsbL, PsbM, PsbT, PsbX, PsbY, PsbZ, Psb30/Ycf12, peripheral proteins PsbO, CyanoQ (PsbQ), PsbU, PsbV and a large number of cofactors. It forms dimeric complexes. Requires The D1/D2 heterodimer binds P680, chlorophylls that are the primary electron donor of PSII, and subsequent electron acceptors. It shares a non-heme iron and each subunit binds pheophytin, quinone, additional chlorophylls, carotenoids and lipids. There is also a Cl(-1) ion associated with D1 and D2, which is required for oxygen evolution. The PSII complex binds additional chlorophylls, carotenoids and specific lipids. as cofactor.

It is found in the cellular thylakoid membrane. The enzyme catalyses 2 a plastoquinone + 4 hnu + 2 H2O = 2 a plastoquinol + O2. In terms of biological role, photosystem II (PSII) is a light-driven water:plastoquinone oxidoreductase that uses light energy to abstract electrons from H(2)O, generating O(2) and a proton gradient subsequently used for ATP formation. It consists of a core antenna complex that captures photons, and an electron transfer chain that converts photonic excitation into a charge separation. The D1/D2 (PsbA/PsbD) reaction center heterodimer binds P680, the primary electron donor of PSII as well as several subsequent electron acceptors. D2 is needed for assembly of a stable PSII complex. This Synechocystis sp. (strain ATCC 27184 / PCC 6803 / Kazusa) protein is Photosystem II D2 protein.